The sequence spans 368 residues: Type 2 DNA topoisomerase 6 subunit A (368 aa).

One can recognise a Topo IIA-type catalytic domain in the interval threonine 9–alanine 148. Tyrosine 103 acts as the O-(5'-phospho-DNA)-tyrosine intermediate in catalysis. Mg(2+) contacts are provided by glutamate 201 and aspartate 253.

It belongs to the TOP6A family. In terms of assembly, homodimer. Heterotetramer of two Top6A and two Top6B chains. The cofactor is Mg(2+).

It catalyses the reaction ATP-dependent breakage, passage and rejoining of double-stranded DNA.. Its function is as follows. Relaxes both positive and negative superturns and exhibits a strong decatenase activity. The protein is Type 2 DNA topoisomerase 6 subunit A of Natronomonas pharaonis (strain ATCC 35678 / DSM 2160 / CIP 103997 / JCM 8858 / NBRC 14720 / NCIMB 2260 / Gabara) (Halobacterium pharaonis).